The following is a 734-amino-acid chain: Diacylglycerol kinase alpha (734 aa).

EF-hand domains are found at residues 109-144 and 154-189; these read RPED…MMRM and ELRP…TVPL. The Ca(2+) site is built by Asp122, Asp124, Asn126, Glu133, Asp167, Asp169, Ser171, Ser173, and Glu178. 2 consecutive Phorbol-ester/DAG-type zinc fingers follow at residues 204-252 and 268-318; these read QHMW…ALPC and THVW…GHEC. Residues 358 to 505 form a necessary and sufficient for the diacylglycerol kinase activity region; the sequence is NLSTSEALRI…MDRWSVEVIP (148 aa). The 135-residue stretch at 371–505 folds into the DAGKc domain; sequence SNTHPLLVFV…MDRWSVEVIP (135 aa). Lys483 is subject to N6-acetyllysine.

This sequence belongs to the eukaryotic diacylglycerol kinase family. As to quaternary structure, monomer.

It localises to the cytoplasm. The protein localises to the cytosol. It carries out the reaction a 1,2-diacyl-sn-glycerol + ATP = a 1,2-diacyl-sn-glycero-3-phosphate + ADP + H(+). The enzyme catalyses a 1-O-alkyl-sn-glycerol + ATP = a 1-O-alkyl-sn-glycero-3-phosphate + ADP + H(+). It catalyses the reaction 1-O-alkyl-2-acyl-sn-glycerol + ATP = 1-O-alkyl-2-acyl-sn-glycero-3-phosphate + ADP + H(+). The catalysed reaction is 1,2-dihexadecanoyl-sn-glycerol + ATP = 1,2-dihexadecanoyl-sn-glycero-3-phosphate + ADP + H(+). It carries out the reaction 1-hexadecanoyl-2-(9Z-octadecenoyl)-sn-glycerol + ATP = 1-hexadecanoyl-2-(9Z-octadecenoyl)-sn-glycero-3-phosphate + ADP + H(+). The enzyme catalyses 2-(9Z-octadecenoyl)-glycerol + ATP = 2-(9Z-octadecenoyl)-sn-glycero-3-phosphate + ADP + H(+). It catalyses the reaction 1,2-di-(9Z-octadecenoyl)-sn-glycerol + ATP = 1,2-di-(9Z-octadecenoyl)-sn-glycero-3-phosphate + ADP + H(+). The catalysed reaction is 1-octadecanoyl-2-(5Z,8Z,11Z,14Z-eicosatetraenoyl)-sn-glycerol + ATP = 1-octadecanoyl-2-(5Z,8Z,11Z,14Z-eicosatetraenoyl)-sn-glycero-3-phosphate + ADP + H(+). It carries out the reaction 1,2-didecanoyl-sn-glycerol + ATP = 1,2-didecanoyl-sn-glycero-3-phosphate + ADP + H(+). The enzyme catalyses 1-O-hexadecyl-2-acetyl-sn-glycerol + ATP = 1-O-hexadecyl-2-acetyl-sn-glycero-3-phosphate + ADP + H(+). It catalyses the reaction 1-O-hexadecyl-2-(5Z,8Z,11Z,14Z-eicosatetraenoyl)-sn-glycerol + ATP = 1-O-hexadecyl-2-(5Z,8Z,11Z,14Z-eicosatetraenoyl)-sn-glycero-3-phosphate + ADP + H(+). The catalysed reaction is 1-O-hexadecyl-2-(9Z-octadecenoyl)-sn-glycerol + ATP = 1-O-hexadecyl-2-(9Z-octadecenoyl)-sn-glycero-3-phosphate + ADP + H(+). It carries out the reaction 1-O-hexadecyl-sn-glycerol + ATP = 1-O-hexadecyl-sn-glycero-3-phosphate + ADP + H(+). It functions in the pathway lipid metabolism; glycerolipid metabolism. With respect to regulation, stimulated by calcium and phosphatidylserine. Functionally, diacylglycerol kinase that converts diacylglycerol/DAG into phosphatidic acid/phosphatidate/PA and regulates the respective levels of these two bioactive lipids. Thereby, acts as a central switch between the signaling pathways activated by these second messengers with different cellular targets and opposite effects in numerous biological processes. Also plays an important role in the biosynthesis of complex lipids. Can also phosphorylate 1-alkyl-2-acylglycerol in vitro as efficiently as diacylglycerol provided it contains an arachidonoyl group. Also involved in the production of alkyl-lysophosphatidic acid, another bioactive lipid, through the phosphorylation of 1-alkyl-2-acetyl glycerol. The protein is Diacylglycerol kinase alpha (DGKA) of Sus scrofa (Pig).